The primary structure comprises 1410 residues: Slit homolog 1 protein (1410 aa).

A signal peptide spans 1-16; that stretch reads MLICFIFILLIPESAT. Positions 17–43 constitute an LRRNT 1 domain; the sequence is CPAECVCVDRTVSCVGQQLTEVPQNIP. 20 LRR repeats span residues 22–42, 43–66, 67–90, 91–114, 116–138, 140–162, 163–186, 219–242, 286–309, 310–333, 335–357, 358–381, 383–405, 407–430, 442–465, 489–510, 511–535, 536–559, 561–583, and 585–607; these read VCVDRTVSCVGQQLTEVPQNI, PNDTIRLDLQDNEITKIGPNDFSS, LMNLKALQLMDNQIVTIHNQSFSS, LVFLQKLRLSRNRIRHLPDNVFQN, LKLTHLDLSENDITVVSDAQLQG, EFLEVLNLDKNHIFCLENNVISS, WVSLEVLTLNGNRLTTFEEPSNAR, TVCATPLNLQGSSIEILQDKFMTC, PPSTTEIRLEQNQISSIPSHSFKN, LKNLTRLDLSKNIITEIQPKAFLG, HNLHTLVLYGNNITDLKSDTFEG, LGSLQLLLLNANQLTCIRRGTFDH, PKLSMLSLYDNDIKSISEVTFQN, TSLSTLHLAKNPLICDCNLQWLAQ, ARCEQPKRLRKKKFATLPPNKFKC, CDCYGTTVDCNKRGLNTIPTSI, PRFATQLLLSGNNISTVDLNSNIHV, LENLEVLDLSNNHITFINDKSFEK, SKLRELRLNDNKLHHFSSMVLDE, and SNLEILDLSGNNIQCFSSIFFNK. In terms of domain architecture, LRRCT 1 spans 195 to 243; sequence NPWNCDCRLRWMRKWLEKAEGQNKTVCATPLNLQGSSIEILQDKFMTCS. The LRRNT 2 domain maps to 259–286; it reads ICPLPCTCTGTTVDCRDSGLTYVPTNLP. The region spanning 417–466 is the LRRCT 2 domain; that stretch reads NPLICDCNLQWLAQINLQKNIETSGARCEQPKRLRKKKFATLPPNKFKCK. An LRRNT 3 domain is found at 484–511; that stretch reads ICPTQCDCYGTTVDCNKRGLNTIPTSIP. One can recognise an LRRCT 3 domain in the interval 619 to 671; the sequence is NDLLCDCRILPLMSWLRSNSSHSIDIPPCQQFQYSDNESDKQRCAAFPEETCS. The 27-residue stretch at 677 to 703 folds into the LRRNT 4 domain; sequence CPPKCSCLDRVVRCSNKNLTSFPSRIP. 6 LRR repeats span residues 681–703, 704–726, 727–750, 752–774, 775–798, and 800–823; these read CSCLDRVVRCSNKNLTSFPSRIP, FDTTELYLDANYINEIPAHDLNR, LYSLTKLDLSHNRLISLENNTFSN, TRLSTLIISYNKLRCLQPLAFNG, LNALRILSLHGNDISFLPQSAFSN, and TSITHIAVGSNSLYCDCNMAWFSK. The LRRCT 4 domain occupies 810-859; that stretch reads NSLYCDCNMAWFSKWIKSKFIEAGIARCEYPNTVSNQLLLTAQPYQFTCD. EGF-like domains follow at residues 871-906 and 908-945; these read DLCLNSPCKNNAICETTSSRKYTCNCTPGFYGVHCE and QIDACYGSPCLNNATCKVAQAGRFNCYCNKGFEGDYCE. Cystine bridges form between C873–C884, C878–C894, C896–C905, C912–C923, C917–C933, C935–C944, C951–C962, C956–C971, C973–C982, C989–C1002, C996–C1011, C1013–C1022, C1029–C1040, C1034–C1049, C1051–C1060, C1076–C1086, C1081–C1097, and C1099–C1108. The region spanning 947 to 983 is the EGF-like 1; calcium-binding domain; the sequence is NIDDCVNSKCENGGKCVDLINSYRCDCPMEYEGKHCE. Positions 985 to 1023 constitute an EGF-like 3 domain; it reads KLEYCTKKLNPCENNGKCIPINGSYSCMCSPGFTGNNCE. An EGF-like 2; calcium-binding domain is found at 1025 to 1061; that stretch reads NIDDCKNVECQNGGSCVDGILSYDCLCRPGYAGQYCE. Residues 1072 to 1109 form the EGF-like 4 domain; sequence KTDACQQSACGQGECVASQNSSDFTCKCHEGFSGPSCD. The Laminin G-like domain maps to 1112–1285; the sequence is MSVGFKNPGA…LENVNTEQSC (174 aa). The stretch at 1197 to 1221 is one LRR 27 repeat; it reads TSERKCFLQIDKNPVQIVENSGKSD. Disulfide bonds link C1259-C1285, C1292-C1302, C1297-C1314, C1316-C1325, C1332-C1368, C1346-C1382, C1357-C1398, and C1361-C1400. The EGF-like 5 domain occupies 1288 to 1326; that stretch reads TVNFCAGIDCGNGKCTNNALSPKGYMCQCDSHFSGEHCD. A CTCK domain is found at 1332–1406; that stretch reads CDKQKFRRHH…QCQCEPTKSV (75 aa).

Interacts with eva-1.

The protein resides in the secreted. Its function is as follows. Functions as a ligand for sax-3 receptor during larval development. Acts via the sax-3/Robo receptor to direct ventral axon guidance and guidance at the midline during embryonic development. This is Slit homolog 1 protein (slt-1) from Caenorhabditis elegans.